Here is a 422-residue protein sequence, read N- to C-terminus: UDP-N-acetylglucosamine 1-carboxyvinyltransferase (422 aa).

23–24 is a binding site for phosphoenolpyruvate; the sequence is KN. Arginine 92 is a binding site for UDP-N-acetyl-alpha-D-glucosamine. The active-site Proton donor is cysteine 116. A 2-(S-cysteinyl)pyruvic acid O-phosphothioketal modification is found at cysteine 116. Residues 121 to 125, 161 to 164, aspartate 306, and isoleucine 328 each bind UDP-N-acetyl-alpha-D-glucosamine; these read RPVDL and KVSV.

Belongs to the EPSP synthase family. MurA subfamily.

The protein localises to the cytoplasm. The catalysed reaction is phosphoenolpyruvate + UDP-N-acetyl-alpha-D-glucosamine = UDP-N-acetyl-3-O-(1-carboxyvinyl)-alpha-D-glucosamine + phosphate. Its pathway is cell wall biogenesis; peptidoglycan biosynthesis. Cell wall formation. Adds enolpyruvyl to UDP-N-acetylglucosamine. This is UDP-N-acetylglucosamine 1-carboxyvinyltransferase from Aliivibrio salmonicida (strain LFI1238) (Vibrio salmonicida (strain LFI1238)).